The sequence spans 497 residues: Dihydrolipoyl dehydrogenase (497 aa).

FAD contacts are provided by residues 60–69, Lys78, Gly142, and 170–172; these read EKEPSLGGTC and TGS. A disulfide bridge links Cys69 with Cys74. Residues 207 to 214, Glu230, Val264, and Gly302 contribute to the NAD(+) site; that span reads GAGVIGLE. FAD is bound by residues Asp343 and 349-352; that span reads MLAH. The active-site Proton acceptor is His475.

The protein belongs to the class-I pyridine nucleotide-disulfide oxidoreductase family. In terms of assembly, homodimer. FAD is required as a cofactor.

The protein localises to the cytoplasm. The enzyme catalyses N(6)-[(R)-dihydrolipoyl]-L-lysyl-[protein] + NAD(+) = N(6)-[(R)-lipoyl]-L-lysyl-[protein] + NADH + H(+). This chain is Dihydrolipoyl dehydrogenase, found in Manduca sexta (Tobacco hawkmoth).